We begin with the raw amino-acid sequence, 63 residues long: Large ribosomal subunit protein uL29 (63 aa).

This sequence belongs to the universal ribosomal protein uL29 family.

This is Large ribosomal subunit protein uL29 from Sulfurovum sp. (strain NBC37-1).